Here is a 299-residue protein sequence, read N- to C-terminus: Probable lipid kinase YegS (299 aa).

A DAGKc domain is found at 2-133 (AEFPASLLIL…IDMAQVNKQT (132 aa)). ATP is bound by residues Thr40, 66-72 (GDGTINE), and Thr95. Mg(2+)-binding residues include Leu215, Asp218, and Leu220. The active-site Proton acceptor is Glu271.

Belongs to the diacylglycerol/lipid kinase family. YegS lipid kinase subfamily. The cofactor is Mg(2+). Requires Ca(2+) as cofactor.

The protein localises to the cytoplasm. Functionally, probably phosphorylates lipids; the in vivo substrate is unknown. This is Probable lipid kinase YegS from Shigella dysenteriae serotype 1 (strain Sd197).